We begin with the raw amino-acid sequence, 574 residues long: Man(5)GlcNAc(2)-PP-dolichol translocation protein RFT1 (574 aa).

Topologically, residues 1 to 24 are lumenal; sequence MAKKNSQLPSTSEQILERSTTGAT. A helical membrane pass occupies residues 25-45; the sequence is FLMMGQLFTKLVTFILNNLLI. Topologically, residues 46–48 are cytoplasmic; it reads RFL. A helical membrane pass occupies residues 49–69; sequence SPRIFGITAFLEFIQGTVLFF. The Lumenal portion of the chain corresponds to 70–110; sequence SRDAIRLSTLRISDSGNGIIDDDDEEEYQETHYKSKVLQTA. A helical membrane pass occupies residues 111–131; the sequence is VNFAYIPFWIGFPLSIGLIAW. The Cytoplasmic portion of the chain corresponds to 132 to 148; that stretch reads QYRNINAYFITLPFFRW. A helical transmembrane segment spans residues 149 to 169; the sequence is SIFLIWLSIIVELLSEPFFIV. Residues 170 to 181 lie on the Lumenal side of the membrane; the sequence is NQFMLNYAARSR. A helical membrane pass occupies residues 182–202; the sequence is FESIAVTTGCIVNFIVVYAVQ. Residues 203–218 are Cytoplasmic-facing; that stretch reads QSRYPMGVVTSDIDKE. Residues 219-239 traverse the membrane as a helical segment; it reads GIAILAFALGKLAHSITLLAC. Over 240-319 the chain is Lumenal; sequence YYWDYLKNFK…INSLCTVEEQ (80 aa). Residues 320-340 form a helical membrane-spanning segment; it reads GIYALLSNYGSLLTRLLFAPI. The Cytoplasmic segment spans residues 341 to 372; the sequence is EESLRLFLARLLSSHNPKNLKLSIEVLVNLTR. The helical transmembrane segment at 373–393 threads the bilayer; that stretch reads FYIYLSLMIIVFGPANSSFLL. At 394-413 the chain is on the lumenal side; sequence QFLIGSKWSTTSVLDTIRVY. A helical transmembrane segment spans residues 414–434; that stretch reads CFYIPFLSLNGIFEAFFQSVA. Topologically, residues 435 to 443 are cytoplasmic; it reads TGDQILKHS. The chain crosses the membrane as a helical span at residues 444–464; it reads YFMMAFSGIFLLNSWLLIEKL. The Lumenal segment spans residues 465 to 469; the sequence is KLSIE. The helical transmembrane segment at 470 to 490 threads the bilayer; sequence GLILSNIINMVLRILYCGVFL. The Cytoplasmic segment spans residues 491–509; that stretch reads NKFHRELFTDSSFFFNFKD. Residues 510–530 form a helical membrane-spanning segment; it reads FKTVIIAGSTICLLDWWFIGY. At 531–532 the chain is on the lumenal side; the sequence is VK. The helical transmembrane segment at 533-553 threads the bilayer; it reads NLQQFVVNVLFAMGLLALILV. Topologically, residues 554-574 are cytoplasmic; sequence KERQTIQSFINKRAVSNSKDV.

Belongs to the RFT1 family.

It localises to the endoplasmic reticulum membrane. The protein operates within protein modification; protein glycosylation. Functionally, intramembrane glycolipid transporter that operates in the biosynthetic pathway of dolichol-linked oligosaccharides, the glycan precursors employed in protein asparagine (N)-glycosylation. The sequential addition of sugars to dolichol pyrophosphate produces dolichol-linked oligosaccharides containing fourteen sugars, including two GlcNAcs, nine mannoses and three glucoses. Once assembled, the oligosaccharide is transferred from the lipid to nascent proteins by oligosaccharyltransferases. The assembly of dolichol-linked oligosaccharides begins on the cytosolic side of the endoplasmic reticulum membrane and finishes in its lumen. RFT1 could mediate the translocation of the cytosolically oriented intermediate DolPP-GlcNAc2Man5, produced by ALG11, into the ER lumen where dolichol-linked oligosaccharides assembly continues. However, the intramembrane lipid transporter activity could not be confirmed in vitro. This is Man(5)GlcNAc(2)-PP-dolichol translocation protein RFT1 from Saccharomyces cerevisiae (strain ATCC 204508 / S288c) (Baker's yeast).